Reading from the N-terminus, the 134-residue chain is UPF0102 protein SYNW1051 (134 aa).

It belongs to the UPF0102 family.

The polypeptide is UPF0102 protein SYNW1051 (Parasynechococcus marenigrum (strain WH8102)).